A 436-amino-acid polypeptide reads, in one-letter code: Gamma-glutamyl phosphate reductase (436 aa).

The protein belongs to the gamma-glutamyl phosphate reductase family.

The protein localises to the cytoplasm. The catalysed reaction is L-glutamate 5-semialdehyde + phosphate + NADP(+) = L-glutamyl 5-phosphate + NADPH + H(+). It functions in the pathway amino-acid biosynthesis; L-proline biosynthesis; L-glutamate 5-semialdehyde from L-glutamate: step 2/2. Catalyzes the NADPH-dependent reduction of L-glutamate 5-phosphate into L-glutamate 5-semialdehyde and phosphate. The product spontaneously undergoes cyclization to form 1-pyrroline-5-carboxylate. The polypeptide is Gamma-glutamyl phosphate reductase (Salinibacter ruber (strain DSM 13855 / M31)).